The following is a 407-amino-acid chain: Multifunctional CCA protein (407 aa).

Residues Gly-8 and Arg-11 each coordinate ATP. Residues Gly-8 and Arg-11 each contribute to the CTP site. 2 residues coordinate Mg(2+): Asp-21 and Asp-23. ATP contacts are provided by Arg-91, Arg-137, and Arg-140. CTP-binding residues include Arg-91, Arg-137, and Arg-140. The 102-residue stretch at 228–329 (SGIHTLMVAQ…IKIFDKMDVW (102 aa)) folds into the HD domain.

This sequence belongs to the tRNA nucleotidyltransferase/poly(A) polymerase family. Bacterial CCA-adding enzyme type 1 subfamily. Monomer. Can also form homodimers and oligomers. The cofactor is Mg(2+). Ni(2+) serves as cofactor.

It carries out the reaction a tRNA precursor + 2 CTP + ATP = a tRNA with a 3' CCA end + 3 diphosphate. The enzyme catalyses a tRNA with a 3' CCA end + 2 CTP + ATP = a tRNA with a 3' CCACCA end + 3 diphosphate. Functionally, catalyzes the addition and repair of the essential 3'-terminal CCA sequence in tRNAs without using a nucleic acid template. Adds these three nucleotides in the order of C, C, and A to the tRNA nucleotide-73, using CTP and ATP as substrates and producing inorganic pyrophosphate. tRNA 3'-terminal CCA addition is required both for tRNA processing and repair. Also involved in tRNA surveillance by mediating tandem CCA addition to generate a CCACCA at the 3' terminus of unstable tRNAs. While stable tRNAs receive only 3'-terminal CCA, unstable tRNAs are marked with CCACCA and rapidly degraded. The chain is Multifunctional CCA protein from Aliivibrio fischeri (strain MJ11) (Vibrio fischeri).